Consider the following 224-residue polypeptide: Small ribosomal subunit protein uS3 (224 aa).

Positions 38-106 constitute a KH type-2 domain; sequence LREFVKEKLG…EVYLNVVEVR (69 aa).

This sequence belongs to the universal ribosomal protein uS3 family. Part of the 30S ribosomal subunit. Forms a tight complex with proteins S10 and S14.

Functionally, binds the lower part of the 30S subunit head. Binds mRNA in the 70S ribosome, positioning it for translation. This chain is Small ribosomal subunit protein uS3, found in Anaeromyxobacter dehalogenans (strain 2CP-1 / ATCC BAA-258).